Reading from the N-terminus, the 124-residue chain is Membrane-anchored ubiquitin-fold protein 2 (124 aa).

Residues 8-74 (LEIKFRLNDG…LENNKTVGDC (67 aa)) form the Ubiquitin-like domain. Residues Cys-115, Cys-117, Cys-119, and Cys-124 are each lipidated (S-palmitoyl cysteine).

Acylated protein. Probably modified with palmitate. Ubiquitous, but three fold higher expression in stamens.

It localises to the cell membrane. May serve as docking site to facilitate the association of other proteins to the plasma membrane. This Arabidopsis thaliana (Mouse-ear cress) protein is Membrane-anchored ubiquitin-fold protein 2 (MUB2).